Consider the following 496-residue polypeptide: Germacrene A hydroxylase (496 aa).

The Cytoplasmic portion of the chain corresponds to 1-2 (ME). The helical; Signal-anchor for type II membrane protein transmembrane segment at 3 to 23 (LTLTTSLGLAVFVFILFKLLT) threads the bilayer. Residues 24 to 496 (GSKSTKNSLP…TAYKTANNSA (473 aa)) lie on the Lumenal side of the membrane. Heme is bound at residue cysteine 432. An N-linked (GlcNAc...) asparagine glycan is attached at asparagine 493.

This sequence belongs to the cytochrome P450 family. Heme serves as cofactor.

It is found in the endoplasmic reticulum membrane. It carries out the reaction (+)-(R)-germacrene A + 3 reduced [NADPH--hemoprotein reductase] + 3 O2 = germacra-1(10),4,11(13)-trien-12-oate + 3 oxidized [NADPH--hemoprotein reductase] + 4 H2O + 4 H(+). It participates in secondary metabolite biosynthesis; terpenoid biosynthesis. Functionally, involved in the biosynthesis of germacrene-derived sesquiterpene lactones. Catalyzes three consecutive oxidations of germacrene A to produce germacrene A acid. Could also catalyze the three-step oxidation of non-natural substrate amorphadiene to artemisinic acid. This Barnadesia spinosa (Spiny barnadesia) protein is Germacrene A hydroxylase.